The following is a 342-amino-acid chain: GTP 3',8-cyclase (342 aa).

A Radical SAM core domain is found at 18-247 (GFSRRFYYLR…QLRGADDGPA (230 aa)). R27 is a binding site for GTP. [4Fe-4S] cluster is bound by residues C34 and C38. Y40 contributes to the S-adenosyl-L-methionine binding site. C41 serves as a coordination point for [4Fe-4S] cluster. R81 is a binding site for GTP. Residue G85 participates in S-adenosyl-L-methionine binding. T112 is a binding site for GTP. S136 lines the S-adenosyl-L-methionine pocket. K173 is a GTP binding site. S-adenosyl-L-methionine is bound at residue M207. Positions 270 and 273 each coordinate [4Fe-4S] cluster. Residue 275–277 (RLR) coordinates GTP. Residue C287 coordinates [4Fe-4S] cluster.

It belongs to the radical SAM superfamily. MoaA family. In terms of assembly, monomer and homodimer. [4Fe-4S] cluster serves as cofactor.

It carries out the reaction GTP + AH2 + S-adenosyl-L-methionine = (8S)-3',8-cyclo-7,8-dihydroguanosine 5'-triphosphate + 5'-deoxyadenosine + L-methionine + A + H(+). It functions in the pathway cofactor biosynthesis; molybdopterin biosynthesis. In terms of biological role, catalyzes the cyclization of GTP to (8S)-3',8-cyclo-7,8-dihydroguanosine 5'-triphosphate. This Aeromonas hydrophila subsp. hydrophila (strain ATCC 7966 / DSM 30187 / BCRC 13018 / CCUG 14551 / JCM 1027 / KCTC 2358 / NCIMB 9240 / NCTC 8049) protein is GTP 3',8-cyclase.